Here is a 69-residue protein sequence, read N- to C-terminus: Large ribosomal subunit protein uL29 (69 aa).

It belongs to the universal ribosomal protein uL29 family.

The chain is Large ribosomal subunit protein uL29 from Methylobacillus flagellatus (strain ATCC 51484 / DSM 6875 / VKM B-1610 / KT).